The following is a 616-amino-acid chain: MPKYRSATTTHGRNMAGARALWRATGMTDADFGKPIIAVVNSFTQFVPGHVHLRDLGKLVAEQIEAAGGVAKEFNTIAVDDGIAMGHGGMLYSLPSRELIADSVEYMVNAHCADAMVCISNCDKITPGMLMASLRLNIPVIFVSGGPMEAGKTKLSDQIIKLDLVDAMIQGADPKVSDSQSDQVERSACPTCGSCSGMFTANSMNCLTEALGLSQPGNGSLLATHADRKQLFLNAGKRIVELTKRYYEQNDESALPRNIASKAAFENAMTLDIAMGGSTNTVLHLLAAAQEAEIDFTMSDIDKLSRKVPQLCKVAPSTQKYHMEDVHRAGGVIGILGELDRAGLLNRDVKNVLGLTLPQTLEQYDVMLTQDDSVKNMFRAGPAGIRTTQAFSQDCRWDSLDDDRANGCIRSLEHAYSKDGGLAVLYGNFAENGCIVKTAGVDDSILKFTGPAKVYESQDDAVDAILGGKVVAGDVVIIRYEGPKGGPGMQEMLYPTSFLKSMGLGKACALITDGRFSGGTSGLSIGHVSPEAASGGSIGLIEDGDLIAIDIPNRGIQLQVSDAELAARREAQEARGDKAWTPKNRERQVSFALRAYASLATSADKGAVRDKSKLGG.

Asp81 provides a ligand contact to Mg(2+). [2Fe-2S] cluster is bound at residue Cys122. The Mg(2+) site is built by Asp123 and Lys124. Lys124 carries the post-translational modification N6-carboxylysine. Position 195 (Cys195) interacts with [2Fe-2S] cluster. Glu491 contributes to the Mg(2+) binding site. Ser517 serves as the catalytic Proton acceptor.

This sequence belongs to the IlvD/Edd family. As to quaternary structure, homodimer. It depends on [2Fe-2S] cluster as a cofactor. The cofactor is Mg(2+).

It carries out the reaction (2R)-2,3-dihydroxy-3-methylbutanoate = 3-methyl-2-oxobutanoate + H2O. The catalysed reaction is (2R,3R)-2,3-dihydroxy-3-methylpentanoate = (S)-3-methyl-2-oxopentanoate + H2O. Its pathway is amino-acid biosynthesis; L-isoleucine biosynthesis; L-isoleucine from 2-oxobutanoate: step 3/4. It participates in amino-acid biosynthesis; L-valine biosynthesis; L-valine from pyruvate: step 3/4. Functionally, functions in the biosynthesis of branched-chain amino acids. Catalyzes the dehydration of (2R,3R)-2,3-dihydroxy-3-methylpentanoate (2,3-dihydroxy-3-methylvalerate) into 2-oxo-3-methylpentanoate (2-oxo-3-methylvalerate) and of (2R)-2,3-dihydroxy-3-methylbutanoate (2,3-dihydroxyisovalerate) into 2-oxo-3-methylbutanoate (2-oxoisovalerate), the penultimate precursor to L-isoleucine and L-valine, respectively. This chain is Dihydroxy-acid dehydratase, found in Escherichia coli O7:K1 (strain IAI39 / ExPEC).